The primary structure comprises 744 residues: Zinc finger protein 483 (744 aa).

Positions 52–134 (RQRFRWFCYS…TLIEDLTQML (83 aa)) constitute an SCAN box domain. The interval 137–156 (KDPVSQDSTVSQEENSKEDK) is disordered. Positions 170–241 (ITLKDVAVNF…EEVSKSSRLD (72 aa)) constitute a KRAB domain. 2 disordered regions span residues 263-308 (ESQQ…SPFG) and 350-385 (KEKT…KIHL). The span at 277 to 293 (NQGNSKGRVAQNKTLGS) shows a compositional bias: polar residues. Composition is skewed to basic and acidic residues over residues 298–308 (KKFDPDKSPFG) and 350–363 (KEKT…KSND). 11 C2H2-type zinc fingers span residues 439–461 (HKCS…RRIH), 467–489 (YMCN…HRTH), 495–517 (FKCD…QRIH), 523–545 (YKCK…QRIH), 551–573 (YTCS…QRIH), 579–601 (YKCG…QRIH), 607–629 (YLCN…QRLH), 635–657 (YKCN…QRIH), 663–685 (YKCK…HRIH), 691–713 (YECN…LKIH), and 719–741 (YECN…RGFH).

The protein belongs to the krueppel C2H2-type zinc-finger protein family.

Its subcellular location is the nucleus. May be involved in transcriptional regulation. This is Zinc finger protein 483 (ZNF483) from Homo sapiens (Human).